The sequence spans 401 residues: Exodeoxyribonuclease 7 large subunit (401 aa).

It belongs to the XseA family. Heterooligomer composed of large and small subunits.

It localises to the cytoplasm. It carries out the reaction Exonucleolytic cleavage in either 5'- to 3'- or 3'- to 5'-direction to yield nucleoside 5'-phosphates.. Bidirectionally degrades single-stranded DNA into large acid-insoluble oligonucleotides, which are then degraded further into small acid-soluble oligonucleotides. This Syntrophotalea carbinolica (strain DSM 2380 / NBRC 103641 / GraBd1) (Pelobacter carbinolicus) protein is Exodeoxyribonuclease 7 large subunit.